Consider the following 270-residue polypeptide: Putative F-box protein At3g24700 (270 aa).

One can recognise an F-box domain in the interval 1–45; sequence MLTDLPLDLESEILSRVPATSLQRLKTTCKRWYALFRDPRFVKKN.

This is Putative F-box protein At3g24700 from Arabidopsis thaliana (Mouse-ear cress).